A 181-amino-acid chain; its full sequence is Large ribosomal subunit protein uL6m (181 aa).

This sequence belongs to the universal ribosomal protein uL6 family.

The protein localises to the mitochondrion. The protein is Large ribosomal subunit protein uL6m (RPL6) of Acanthamoeba castellanii (Amoeba).